The sequence spans 288 residues: Probable anion import ATP-binding protein HVO_1886 (288 aa).

Residues 1–18 (MTTERPDAGDSGSEKPDE) show a composition bias toward basic and acidic residues. A disordered region spans residues 1–33 (MTTERPDAGDSGSEKPDETAAPDPAANGARRSK). Residues 36–282 (LAARSLGHGF…PDDDRVRQFV (247 aa)) enclose the ABC transporter domain. 68–75 (GPSGTGKT) is a binding site for ATP.

Belongs to the ABC transporter superfamily. In terms of assembly, the complex is composed of two ATP-binding proteins (HVO_1886), two transmembrane proteins (HVO_1887) and a solute-binding protein (HVO_1888).

The protein resides in the cell membrane. In terms of biological role, part of an ABC transporter complex involved in anions import. Responsible for energy coupling to the transport system. The polypeptide is Probable anion import ATP-binding protein HVO_1886 (Haloferax volcanii (strain ATCC 29605 / DSM 3757 / JCM 8879 / NBRC 14742 / NCIMB 2012 / VKM B-1768 / DS2) (Halobacterium volcanii)).